The following is a 325-amino-acid chain: Quinone oxidoreductase (325 aa).

It belongs to the zinc-containing alcohol dehydrogenase family. Quinone oxidoreductase subfamily.

It catalyses the reaction 2 a quinone + NADPH + H(+) = 2 a 1,4-benzosemiquinone + NADP(+). This chain is Quinone oxidoreductase (qor), found in Pseudomonas aeruginosa (strain ATCC 15692 / DSM 22644 / CIP 104116 / JCM 14847 / LMG 12228 / 1C / PRS 101 / PAO1).